A 581-amino-acid chain; its full sequence is Kelch-like protein 38 (581 aa).

One can recognise a BTB domain in the interval Thr34 to Ala101. Residues Cys136–Ala237 enclose the BACK domain. 6 Kelch repeats span residues Phe285 to Arg332, Val334 to Asn383, Phe384 to Gln431, Leu433 to Glu479, Gln480 to Asn521, and Leu523 to Cys573.

The polypeptide is Kelch-like protein 38 (Klhl38) (Mus musculus (Mouse)).